We begin with the raw amino-acid sequence, 76 residues long: MDLETRVSGHEKPKEEIRRIPDCQYAKTRSSPCEPLWGLEEAASRTSAGSWAHQDGLGDSSLFEIHGNQAITGSHQ.

In terms of biological role, plays a role in viral replication. This is uORF2 protein from Homo sapiens (Human).